Reading from the N-terminus, the 617-residue chain is KIF-binding protein (617 aa).

The interval 48–83 is disordered; it reads ALLGPAPEDEDEPAADDGPGDQALGAGEPREAEGPG. The segment covering 54-66 has biased composition (acidic residues); that stretch reads PEDEDEPAADDGP. Residue Ser-174 is modified to Phosphoserine.

It belongs to the KIF-binding protein family. As to quaternary structure, interacts with KIF1B; positively regulates KIF1B microtubule motor activity. Interacts with STMN2. In terms of tissue distribution, in the embryo it is expressed in cortical neurons; expression increases during neuronal development.

The protein resides in the cytoplasm. Its subcellular location is the cytoskeleton. Activator of KIF1B plus-end-directed microtubule motor activity. Required for organization of axonal microtubules, and axonal outgrowth and maintenance during peripheral and central nervous system development. In Mus musculus (Mouse), this protein is KIF-binding protein.